A 515-amino-acid chain; its full sequence is MAKISRLFGSTVKAAITAQAGFHGKRIPAVSSLQEHIVKSTPARYNSTQACLENDISGTDNKGFKGHDMLAPFTAGWQSTDVDPLIIEKSEGSHVYDMQGRKYIDTLAGLWCTALGGNEPRLVDAATKQLNTLPFYHSFWNRTTKPSLDLAKELLDMFTAKKMAKAFFTNSGSEANDTQVKLVWYYNNALGRPNKKKFIARAKAYHGSTLISASLTGLPALHQNFDLPAPFVLHTDCPHYWRYHLPGETEEEFSTRLAKNLEDLILKEGPETIAAFIAEPVMGAGGVIPPPATYFDKIQAVVKKYDILFIADEVICAFGRLGTMFGSDMYNIKPDLVTLAKALSSAYMPIGAVLVSPEVSDVIHSQSNKLGSFSHGFTYSGHPVACAVALEAIKIYKERNMVERVNRISPKFQEGLKAFSDSPIIGEIRGLGLILATEFANNKSPNDHFPPEWGVGAYFGAQCQKNGMLVRVAGDTIMMSPPFVVTPEELDELIRIYGKALRETEKRVEELKSQK.

A mitochondrion-targeting transit peptide spans Met1 to Ser57. Gly172–Ser173 serves as a coordination point for pyridoxal 5'-phosphate. Tyr205 serves as a coordination point for substrate. A pyridoxal 5'-phosphate-binding site is contributed by Asp312. Residue Lys341 coordinates substrate. Position 341 is an N6-(pyridoxal phosphate)lysine (Lys341).

This sequence belongs to the class-III pyridoxal-phosphate-dependent aminotransferase family. In terms of tissue distribution, expressed in leaves, roots, stems, flowers and fruits.

Its subcellular location is the mitochondrion. The enzyme catalyses 4-aminobutanoate + pyruvate = succinate semialdehyde + L-alanine. It catalyses the reaction 4-aminobutanoate + glyoxylate = succinate semialdehyde + glycine. Transaminase that degrades gamma-amino butyric acid (GABA) and uses pyruvate or glyoxylate as amino-group acceptor. Cannot use beta-alanine, ornithine, acetylornithine, serine, glycine, asparagine, glutamine, glutamate, valine, leucine, isoleucine, methionine, phenylalanine, histidine, lysine, arginine, aspartate, threonine, tyrosine, tryptophan, proline, or cysteine as amino donors. Acts predominantly in vegetative tissues. The sequence is that of Gamma aminobutyrate transaminase 1, mitochondrial (GABA-TP1) from Solanum lycopersicum (Tomato).